A 663-amino-acid polypeptide reads, in one-letter code: Drug sensory protein A (663 aa).

The next 3 helical transmembrane spans lie at 32–52 (LMAA…FWAV), 165–185 (VFIP…GINP), and 199–219 (VTIA…VFNA). The HAMP domain occupies 220–272 (LTITQPIKELLLGVKNIAAGNFKQRITLPFGGELGELIVNFNEMAERLERYEA). A PAS domain is found at 281–351 (EKAKLDTLVS…QPLRELAADQ (71 aa)). Positions 429–656 (NVSHELRTPL…TFWFDLAVYQ (228 aa)) constitute a Histidine kinase domain. Phosphohistidine; by autocatalysis is present on histidine 432.

It localises to the cell membrane. It carries out the reaction ATP + protein L-histidine = ADP + protein N-phospho-L-histidine.. This chain is Drug sensory protein A (dspA), found in Synechocystis sp. (strain ATCC 27184 / PCC 6803 / Kazusa).